The sequence spans 603 residues: UvrABC system protein C (603 aa).

The 78-residue stretch at 15 to 92 folds into the GIY-YIG domain; that stretch reads DQPGCYLMKD…IKKHDPRFNI (78 aa). The 36-residue stretch at 197 to 232 folds into the UVR domain; the sequence is KTVKNDLMKKMQEAAENMEFEKAGEFRDQINAIETT.

The protein belongs to the UvrC family. In terms of assembly, interacts with UvrB in an incision complex.

Its subcellular location is the cytoplasm. Functionally, the UvrABC repair system catalyzes the recognition and processing of DNA lesions. UvrC both incises the 5' and 3' sides of the lesion. The N-terminal half is responsible for the 3' incision and the C-terminal half is responsible for the 5' incision. The polypeptide is UvrABC system protein C (Listeria innocua serovar 6a (strain ATCC BAA-680 / CLIP 11262)).